A 634-amino-acid polypeptide reads, in one-letter code: Probable potassium transport system protein Kup (634 aa).

Transmembrane regions (helical) follow at residues 19–39 (AIGL…TSPL), 62–82 (VLSL…VIFV), 113–133 (FVVV…MITP), 150–170 (GLEH…FLIQ), 177–197 (IGIL…ALGV), 225–245 (IGVA…ALYA), 259–279 (WFLL…ATIL), 291–311 (LLAP…ATVI), 349–369 (IYIG…VLGF), 379–399 (YGVA…VVIW), 406–426 (LWLG…FFAA), and 431–451 (VIQG…LMST).

The protein belongs to the HAK/KUP transporter (TC 2.A.72) family.

It is found in the cell inner membrane. The catalysed reaction is K(+)(in) + H(+)(in) = K(+)(out) + H(+)(out). Functionally, transport of potassium into the cell. Likely operates as a K(+):H(+) symporter. This is Probable potassium transport system protein Kup from Pseudomonas aeruginosa (strain LESB58).